The sequence spans 158 residues: Transcription elongation factor GreA (158 aa).

Residues 47-74 (AEYHAAKEEQSHNEGRIAELEDKLARAD) adopt a coiled-coil conformation.

The protein belongs to the GreA/GreB family.

Necessary for efficient RNA polymerase transcription elongation past template-encoded arresting sites. The arresting sites in DNA have the property of trapping a certain fraction of elongating RNA polymerases that pass through, resulting in locked ternary complexes. Cleavage of the nascent transcript by cleavage factors such as GreA or GreB allows the resumption of elongation from the new 3'terminus. GreA releases sequences of 2 to 3 nucleotides. In Bradyrhizobium sp. (strain BTAi1 / ATCC BAA-1182), this protein is Transcription elongation factor GreA.